An 817-amino-acid chain; its full sequence is Protein EFR3 homolog B (817 aa).

Serine 212, serine 214, and serine 216 each carry phosphoserine.

Belongs to the EFR3 family. As to quaternary structure, component of a phosphatidylinositol 4-kinase (PI4K) complex, composed of PI4KA, EFR3 (EFR3A or EFR3B), TTC7 (TTC7A or TTC7B) and HYCC (HYCC1 or HYCC2). Post-translationally, palmitoylated at its N-terminus, anchoring the protein to the plasma membrane.

The protein resides in the cell membrane. The protein localises to the cytoplasm. It localises to the cytosol. Component of a complex required to localize phosphatidylinositol 4-kinase (PI4K) to the plasma membrane. The complex acts as a regulator of phosphatidylinositol 4-phosphate (PtdIns(4)P) synthesis. In the complex, EFR3B probably acts as the membrane-anchoring component. Also involved in responsiveness to G-protein-coupled receptors; it is however unclear whether this role is direct or indirect. The chain is Protein EFR3 homolog B from Homo sapiens (Human).